The following is a 136-amino-acid chain: Histone H3.1/H3.2 (136 aa).

Residues 1-43 are disordered; it reads MARTKQTARKSTGGKAPRKQLASKAARKSAPSTGGVKKPHRYK. N6,N6,N6-trimethyllysine; alternate is present on Lys5. Residue Lys5 is modified to N6,N6-dimethyllysine; alternate. N6-methyllysine; alternate occurs at positions 5 and 10. Lys10 bears the N6-acetyllysine; alternate mark. Ser11 carries the phosphoserine modification. Lys15 is subject to N6,N6-dimethyllysine; alternate. Lys15, Lys19, Lys24, Lys28, and Lys37 each carry N6-acetyllysine; alternate. An N6-methyllysine; alternate mark is found at Lys19, Lys24, Lys28, and Lys37. N6,N6,N6-trimethyllysine; alternate is present on residues Lys28 and Lys37. Residues Lys28 and Lys37 each carry the N6,N6-dimethyllysine; alternate modification. 2 positions are modified to N6-acetyllysine: Lys57 and Lys65. The residue at position 80 (Lys80) is an N6,N6,N6-trimethyllysine; alternate. At Lys80 the chain carries N6,N6-dimethyllysine; alternate. An N6-methyllysine; alternate modification is found at Lys80.

The protein belongs to the histone H3 family. In terms of assembly, the nucleosome is a histone octamer containing two molecules each of H2A, H2B, H3 and H4 assembled in one H3-H4 heterotetramer and two H2A-H2B heterodimers. The octamer wraps approximately 147 bp of DNA. In terms of processing, phosphorylated to form H3S10ph. H3S10ph promotes subsequent H3K14ac formation and is required for transcriptional activation through TBP recruitment to the promoters. Post-translationally, mono-, di- and trimethylated by the COMPASS complex to form H3K4me1/2/3. H3K4me activates gene expression by regulating transcription elongation and plays a role in telomere length maintenance. H3K4me enrichment correlates with transcription levels, and occurs in a 5' to 3' gradient with H3K4me3 enrichment at the 5'-end of genes, shifting to H3K4me2 and then H3K4me1. Methylated by SET2 to form H3K36me. H3K36me represses gene expression. Methylated by DOT1 to form H3K79me. H3K79me is required for association of SIR proteins with telomeric regions and for telomeric silencing. The COMPASS-mediated formation of H3K4me2/3 and the DOT1-mediated formation of H3K79me require H2BK123ub1. Acetylation of histone H3 leads to transcriptional activation. H3K14ac formation by GCN5 is promoted by H3S10ph. H3K14ac can also be formed by ESA1. H3K56ac formation occurs predominantly in newly synthesized H3 molecules during G1, S and G2/M of the cell cycle and may be involved in DNA repair.

The protein localises to the nucleus. Its subcellular location is the chromosome. Functionally, core component of nucleosome. Nucleosomes wrap and compact DNA into chromatin, limiting DNA accessibility to the cellular machineries which require DNA as a template. Histones thereby play a central role in transcription regulation, DNA repair, DNA replication and chromosomal stability. DNA accessibility is regulated via a complex set of post-translational modifications of histones, also called histone code, and nucleosome remodeling. This chain is Histone H3.1/H3.2 (HHT1), found in Meyerozyma guilliermondii (strain ATCC 6260 / CBS 566 / DSM 6381 / JCM 1539 / NBRC 10279 / NRRL Y-324) (Yeast).